The sequence spans 919 residues: MVRLSTKPPNPKVEMNLKEPPITGAGAGAAASPPAPSTLRRNPPRSARPPPTPLPNSKPSQISRLLEEAAERLKVFLRIRPLPLPERKGKAKSPTNPKQVCLVANSPNSVALTVPHSKLLDPKRGRTEVFDGFSSVFSPDSSQHDVFSQVMNPLVDDLLLGGKSGLLVAMGPTGSGKTHTVFGSPRNPGLVPLTLRRIFSPTTHEPFSKLRSFCFSMFEILSEGKGERILDLLSDATDLVLQQSTIKGLKEVSVENFADAEALLFSGMLKRTTAATNANSKSSRSQCIITIRAVHKSSDAESENSLNNAVLTIADLAGAERERRTGNQGTRLLESNFINNTSMVFGLCLRSLLEHQKNKKKPLEKHFKNSMLTRYLRDYLEGRKKMTLILNVKPGDDDYLDTSFLLRQASPYMKIKYTNLEDSSGLVSQKRSSASLICQENTKKRKIHKVAGKDDIDKDDGVTISEKDESQYKLLNSELRRVSRNEEIMTNFARALWTVLKQYKQKLLESENAVESTRELLRSKDIKIMELEKKLKVLSCSCKKFPAVEDTFVEQNNDVSSGQVAQSFVSLSSQTDLVSIDSALNKSLAVEEVSEESTGHGPERSSDYDDKTGTGGSDVCDTSIIKLIAEEELCSGDCKPEKASSSDAFIPEHDVEKENIGIVVQVLDKKLDRSESCSDGGGVTHSSSSLDHPSDQSFTDTCLQNESANLSPQFIGASKKSPIEQSEEEREEIHNITTEGIQQNVHTRGVKHHSTPSCSQEVNSGSLHVSSSQLQGMGALQQDPQSERCKPTVEITIVEYGCAQPPHVVDDHGGMYPCTLNGKSSPRKAPISPTKDNQAEKLTDKIEDLSASKPCNRKNTRRRLQPVSAMMLKEFTGPDIFVDTRKEEKVKSSRDAMGRSDKLIRLLTDHPPRARGRAQ.

Positions 1–59 (MVRLSTKPPNPKVEMNLKEPPITGAGAGAAASPPAPSTLRRNPPRSARPPPTPLPNSKP) are disordered. The span at 28–45 (GAAASPPAPSTLRRNPPR) shows a compositional bias: low complexity. Positions 46–56 (SARPPPTPLPN) are enriched in pro residues. The Kinesin motor domain maps to 72 to 415 (RLKVFLRIRP…LRQASPYMKI (344 aa)). 171–178 (GPTGSGKT) contacts ATP. Disordered stretches follow at residues 591–615 (EEVS…TGTG), 674–700 (SESC…SFTD), 711–730 (SPQF…EEER), 737–764 (TTEG…EVNS), and 886–919 (KEEK…GRAQ). Basic and acidic residues predominate over residues 597 to 612 (STGHGPERSSDYDDKT). A compositionally biased stretch (low complexity) spans 685-697 (HSSSSLDHPSDQS). The span at 755–764 (TPSCSQEVNS) shows a compositional bias: polar residues. The span at 886 to 912 (KEEKVKSSRDAMGRSDKLIRLLTDHPP) shows a compositional bias: basic and acidic residues.

This sequence belongs to the TRAFAC class myosin-kinesin ATPase superfamily. Kinesin family. KIN-6 subfamily.

This Oryza sativa subsp. japonica (Rice) protein is Kinesin-like protein KIN-6.